Here is a 193-residue protein sequence, read N- to C-terminus: Segregation and condensation protein B (193 aa).

Belongs to the ScpB family. Homodimer. Homodimerization may be required to stabilize the binding of ScpA to the Smc head domains. Component of a cohesin-like complex composed of ScpA, ScpB and the Smc homodimer, in which ScpA and ScpB bind to the head domain of Smc. The presence of the three proteins is required for the association of the complex with DNA.

The protein localises to the cytoplasm. Functionally, participates in chromosomal partition during cell division. May act via the formation of a condensin-like complex containing Smc and ScpA that pull DNA away from mid-cell into both cell halves. This Shouchella clausii (strain KSM-K16) (Alkalihalobacillus clausii) protein is Segregation and condensation protein B.